A 443-amino-acid chain; its full sequence is MRILGSLPNNIRKCTFKLILQKRYSHTDILKELLYDISDSQKFIPSASPIASNLLRVSSYGKLSSLFIEYSKARSKKEFDQLRTSDFQSILRSVVCPKNGKNIRHRDRDLVSLQIKLILQDADRLGIQFNIVDYTHILRVAMYTGNKHILEYIVARVKEKRIRPSVDYFNAILGVIGGNRWSLSKFQSPAFRGSPVTEPVSGKMLDMIEVDFPNYDLVPNSTTYDYLMVGLSRDGKIREIYDLIDTVWGINENSSSKKVDCGNVTFPTHHTVFSIISALGYLGDVSSAVSLSRKLTSVYKINFPELAWRYIIYWSIASLQFRAPAGHARIKNIELFIRLYSQMYRHCVPIIEIYDTSIKFYMKHGRFGLLEKVCESWTKQFLGSLEKQNNEVKKKHLQLLEKQISKLMRYAETERPHDTKRVSVKWSNVLNQIHSSVGDPAKP.

Residues 1–13 (MRILGSLPNNIRK) constitute a mitochondrion transit peptide. 2 PPR repeats span residues 130 to 164 (NIVD…RIRP) and 220 to 254 (NSTT…NENS).

Its subcellular location is the mitochondrion. In terms of biological role, mitochondrial RNA-binding protein required for the stability of the atp9 mRNA. The protein is Pentatricopeptide repeat-containing protein 6, mitochondrial (ppr6) of Schizosaccharomyces pombe (strain 972 / ATCC 24843) (Fission yeast).